Consider the following 111-residue polypeptide: Secreted RxLR effector protein 159 (111 aa).

An N-terminal signal peptide occupies residues 1-21 (MRGAYYVAIAFLVAASSRTAA). Residues 50-71 (RVLRGSRDLKDKLAVYANDEQR) carry the RxLR-dEER motif. Residue Asn-81 is glycosylated (N-linked (GlcNAc...) asparagine).

It belongs to the RxLR effector family.

The protein localises to the secreted. It localises to the host nucleus. Its subcellular location is the host cytoplasm. Functionally, secreted effector that completely suppresses the host cell death induced by cell death-inducing proteins. This chain is Secreted RxLR effector protein 159, found in Plasmopara viticola (Downy mildew of grapevine).